Consider the following 84-residue polypeptide: Beta-cardiotoxin CTX14 (84 aa).

Residues 1-21 (MKTLLLTLVVVTIVCLDLGYT) form the signal peptide. Cystine bridges form between Cys-24/Cys-43, Cys-36/Cys-61, Cys-65/Cys-76, and Cys-77/Cys-82.

It belongs to the three-finger toxin family. Short-chain subfamily. Aminergic toxin sub-subfamily. Expressed by the venom gland.

The protein resides in the secreted. Functionally, acts as a beta-blocker by binding to beta-1 and beta-2 adrenergic receptors (ADRB1 and ADRB2). It dose-dependently decreases the heart rate (bradycardia), whereas conventional cardiotoxins increases it. At 100 mg/kg, intraperitoneal injection into mice provokes labored breathing, impaired locomotion, lack of response to external stimuli, and death (after 30 minutes). This is Beta-cardiotoxin CTX14 from Ophiophagus hannah (King cobra).